Consider the following 276-residue polypeptide: NH(3)-dependent NAD(+) synthetase (276 aa).

43–50 (GISGGVDS) is a binding site for ATP. Residue D49 coordinates Mg(2+). Position 146 (R146) interacts with deamido-NAD(+). Position 166 (T166) interacts with ATP. Residue E171 coordinates Mg(2+). 2 residues coordinate deamido-NAD(+): K179 and D186. The ATP site is built by K195 and T217. Position 266-267 (266-267 (HK)) interacts with deamido-NAD(+).

It belongs to the NAD synthetase family. In terms of assembly, homodimer.

The enzyme catalyses deamido-NAD(+) + NH4(+) + ATP = AMP + diphosphate + NAD(+) + H(+). Its pathway is cofactor biosynthesis; NAD(+) biosynthesis; NAD(+) from deamido-NAD(+) (ammonia route): step 1/1. Catalyzes the ATP-dependent amidation of deamido-NAD to form NAD. Uses ammonia as a nitrogen source. In Shewanella baltica (strain OS185), this protein is NH(3)-dependent NAD(+) synthetase.